Reading from the N-terminus, the 263-residue chain is UPF0246 protein Mmar10_0828 (263 aa).

This sequence belongs to the UPF0246 family.

The protein is UPF0246 protein Mmar10_0828 of Maricaulis maris (strain MCS10) (Caulobacter maris).